Here is a 368-residue protein sequence, read N- to C-terminus: S-adenosylmethionine decarboxylase proenzyme 1 (368 aa).

Active-site residues include Glu-9 and Arg-12. Ser-69 acts as the Schiff-base intermediate with substrate; via pyruvic acid in catalysis. Position 69 is a pyruvic acid (Ser); by autocatalysis (Ser-69). The active-site Proton donor; for catalytic activity is the Cys-83. Residues Ser-234 and His-247 each act as proton acceptor; for processing activity in the active site.

Belongs to the eukaryotic AdoMetDC family. Requires pyruvate as cofactor. In terms of processing, is synthesized initially as an inactive proenzyme. Formation of the active enzyme involves a self-maturation process in which the active site pyruvoyl group is generated from an internal serine residue via an autocatalytic post-translational modification. Two non-identical subunits are generated from the proenzyme in this reaction, and the pyruvate is formed at the N-terminus of the alpha chain, which is derived from the carboxyl end of the proenzyme. The post-translation cleavage follows an unusual pathway, termed non-hydrolytic serinolysis, in which the side chain hydroxyl group of the serine supplies its oxygen atom to form the C-terminus of the beta chain, while the remainder of the serine residue undergoes an oxidative deamination to produce ammonia and the pyruvoyl group blocking the N-terminus of the alpha chain.

It carries out the reaction S-adenosyl-L-methionine + H(+) = S-adenosyl 3-(methylsulfanyl)propylamine + CO2. The protein operates within amine and polyamine biosynthesis; S-adenosylmethioninamine biosynthesis; S-adenosylmethioninamine from S-adenosyl-L-methionine: step 1/1. The sequence is that of S-adenosylmethionine decarboxylase proenzyme 1 (SAMDC1) from Brassica juncea (Indian mustard).